The primary structure comprises 453 residues: Adenylyltransferase and sulfurtransferase MOCS3 (453 aa).

T62 is modified (phosphothreonine). ATP-binding positions include G101, D122, 129–133, K146, and 190–191; these read SNFHR and DN. Residues C231 and C234 each contribute to the Zn(2+) site. C248 (glycyl thioester intermediate; for adenylyltransferase activity) is an active-site residue. Residues C306 and C309 each coordinate Zn(2+). The region spanning 355–451 is the Rhodanese domain; the sequence is QAQPHLLIDV…WTNSVDPSFP (97 aa). Catalysis depends on C410, which acts as the Cysteine persulfide intermediate; for sulfurtransferase activity.

It in the N-terminal section; belongs to the HesA/MoeB/ThiF family. UBA4 subfamily. Zn(2+) is required as a cofactor.

Its subcellular location is the cytoplasm. It is found in the cytosol. It catalyses the reaction [molybdopterin-synthase sulfur-carrier protein]-C-terminal Gly-Gly + ATP + H(+) = [molybdopterin-synthase sulfur-carrier protein]-C-terminal Gly-Gly-AMP + diphosphate. The enzyme catalyses [molybdopterin-synthase sulfur-carrier protein]-C-terminal Gly-Gly-AMP + S-sulfanyl-L-cysteinyl-[cysteine desulfurase] + AH2 = [molybdopterin-synthase sulfur-carrier protein]-C-terminal-Gly-aminoethanethioate + L-cysteinyl-[cysteine desulfurase] + A + AMP + 2 H(+). Its pathway is tRNA modification; 5-methoxycarbonylmethyl-2-thiouridine-tRNA biosynthesis. It functions in the pathway cofactor biosynthesis; molybdopterin biosynthesis. In terms of biological role, plays a central role in 2-thiolation of mcm(5)S(2)U at tRNA wobble positions of cytosolic tRNA(Lys), tRNA(Glu) and tRNA(Gln). Also essential during biosynthesis of the molybdenum cofactor. Acts by mediating the C-terminal thiocarboxylation of sulfur carriers URM1 and MOCS2A. Its N-terminus first activates URM1 and MOCS2A as acyl-adenylates (-COAMP), then the persulfide sulfur on the catalytic cysteine is transferred to URM1 and MOCS2A to form thiocarboxylation (-COSH) of their C-terminus. The reaction probably involves hydrogen sulfide that is generated from the persulfide intermediate and that acts as a nucleophile towards URM1 and MOCS2A. Subsequently, a transient disulfide bond is formed. Does not use thiosulfate as sulfur donor; NFS1 probably acting as a sulfur donor for thiocarboxylation reactions. This Drosophila yakuba (Fruit fly) protein is Adenylyltransferase and sulfurtransferase MOCS3.